A 200-amino-acid polypeptide reads, in one-letter code: Oligoribonuclease (200 aa).

Positions 5–169 (MVWIDCEMTG…ADIRESIAEL (165 aa)) constitute an Exonuclease domain. Tyr126 is an active-site residue.

It belongs to the oligoribonuclease family.

It is found in the cytoplasm. 3'-to-5' exoribonuclease specific for small oligoribonucleotides. This chain is Oligoribonuclease, found in Streptomyces coelicolor (strain ATCC BAA-471 / A3(2) / M145).